A 350-amino-acid chain; its full sequence is Renin receptor (350 aa).

The signal sequence occupies residues 1–17 (MAVLVVLLFFLVAGALG). At 18 to 302 (NEFSILRSPG…YNLAYKYNLE (285 aa)) the chain is on the extracellular side. The helical transmembrane segment at 303 to 323 (YSVVFNLVLWIMIGLALAVII) threads the bilayer. Topologically, residues 324–350 (TSYNIWNMDPGYDSIIYRMTNQKIRID) are cytoplasmic. A Mediates retrograde transport to the ER motif is present at residues 346-350 (KIRID).

In terms of assembly, interacts with renin. Accessory component of the multisubunit proton-transporting vacuolar (V)-ATPase protein pump. Interacts (via N-terminus) with ATP6AP1 (via N-terminus). Interacts with ATP6V0D1; ATP6V0D1 is a V-ATPase complex subunit and the interaction promotes V-ATPase complex assembly. Interacts with TMEM9; TMEM9 is a V-ATPase assembly regulator and the interaction induces the interaction with ATP6V0D1. Interacts with VMA21 (via N-terminus); VMA21 is a V-ATPase accessory component. Post-translationally, phosphorylated. Proteolytically cleaved by a furin-like convertase in the trans-Golgi network to generate N- and C-terminal fragments. In terms of tissue distribution, expressed in glutamatergic and GABAergic neurons with highest levels in the cortex, the hippocampus, the medial habenular nucleus, the cerebellum, the medulla and the olfactory bulb (at protein level).

The protein localises to the endoplasmic reticulum membrane. Its subcellular location is the lysosome membrane. The protein resides in the cytoplasmic vesicle. It is found in the autophagosome membrane. It localises to the cell projection. The protein localises to the dendritic spine membrane. Its subcellular location is the axon. The protein resides in the endosome membrane. It is found in the clathrin-coated vesicle membrane. It localises to the secretory vesicle. The protein localises to the synaptic vesicle membrane. In terms of biological role, multifunctional protein which functions as a renin, prorenin cellular receptor and is involved in the assembly of the lysosomal proton-transporting V-type ATPase (V-ATPase) and the acidification of the endo-lysosomal system. May mediate renin-dependent cellular responses by activating ERK1 and ERK2. By increasing the catalytic efficiency of renin in AGT/angiotensinogen conversion to angiotensin I, may also play a role in the renin-angiotensin system (RAS). Through its function in V-type ATPase (v-ATPase) assembly and acidification of the lysosome it regulates protein degradation and may control different signaling pathways important for proper brain development, synapse morphology and synaptic transmission. This is Renin receptor from Mus musculus (Mouse).